Consider the following 394-residue polypeptide: Dual-specificity RNA methyltransferase RlmN (394 aa).

The active-site Proton acceptor is the E116. Residues E122 to D365 form the Radical SAM core domain. An intrachain disulfide couples C129 to C370. The [4Fe-4S] cluster site is built by C136, C140, and C143. S-adenosyl-L-methionine is bound by residues G196–E197, S228, S250–H252, and N327. C370 (S-methylcysteine intermediate) is an active-site residue.

This sequence belongs to the radical SAM superfamily. RlmN family. [4Fe-4S] cluster is required as a cofactor.

It is found in the cytoplasm. The catalysed reaction is adenosine(2503) in 23S rRNA + 2 reduced [2Fe-2S]-[ferredoxin] + 2 S-adenosyl-L-methionine = 2-methyladenosine(2503) in 23S rRNA + 5'-deoxyadenosine + L-methionine + 2 oxidized [2Fe-2S]-[ferredoxin] + S-adenosyl-L-homocysteine. The enzyme catalyses adenosine(37) in tRNA + 2 reduced [2Fe-2S]-[ferredoxin] + 2 S-adenosyl-L-methionine = 2-methyladenosine(37) in tRNA + 5'-deoxyadenosine + L-methionine + 2 oxidized [2Fe-2S]-[ferredoxin] + S-adenosyl-L-homocysteine. Its function is as follows. Specifically methylates position 2 of adenine 2503 in 23S rRNA and position 2 of adenine 37 in tRNAs. m2A2503 modification seems to play a crucial role in the proofreading step occurring at the peptidyl transferase center and thus would serve to optimize ribosomal fidelity. This chain is Dual-specificity RNA methyltransferase RlmN, found in Dinoroseobacter shibae (strain DSM 16493 / NCIMB 14021 / DFL 12).